A 926-amino-acid chain; its full sequence is Ubiquitin carboxyl-terminal hydrolase 4 (926 aa).

Positions 205–328 (SQMEILLIDI…WLKSNYGSQV (124 aa)) constitute a Rhodanese domain. Ser443 carries the post-translational modification Phosphoserine. Residues 562–923 (VGLENLGNSC…NAYVLFYHRV (362 aa)) form the USP domain. Catalysis depends on Cys571, which acts as the Nucleophile. The active-site Proton acceptor is the His880.

This sequence belongs to the peptidase C19 family. In terms of assembly, interacts with BRO1, RFU1 and VPS32. Associates with the 26S proteasome.

It localises to the cytoplasm. The protein resides in the late endosome membrane. It carries out the reaction Thiol-dependent hydrolysis of ester, thioester, amide, peptide and isopeptide bonds formed by the C-terminal Gly of ubiquitin (a 76-residue protein attached to proteins as an intracellular targeting signal).. RFU1 is an inhibitor of deubiquitination activity. Ubiquitin thioesterase that acts at the late endosome/prevacuolar compartment to recover ubiquitin from ubiquitinated membrane proteins en route to the vacuole. Also removes ubiquitin from soluble proteins targeted to proteasomes. Is essential to maintain a normal level of free ubiquitin. Involved in the ammonium-induced down-regulation of the GAP1 permease and the UME3 destruction in response to oxidative stress. Has a role in the RAD9 checkpoint response to TOP1 poisons. Required for promoting coordination of DNA replication and avoids DNA overreplication. This is Ubiquitin carboxyl-terminal hydrolase 4 (DOA4) from Saccharomyces cerevisiae (strain YJM789) (Baker's yeast).